Consider the following 104-residue polypeptide: U20-lycotoxin-Ls1c (104 aa).

Residues 1–30 form the signal peptide; sequence MFSTSDQVSKMNSRILSALLILGIATCVIA. The WAP domain maps to 31-76; sequence GGFCPKSRHPQCDLSYKINDCCAQSDCRVGSVCCVEGCGNVCRAES. Intrachain disulfides connect Cys-34–Cys-64, Cys-42–Cys-68, Cys-51–Cys-63, Cys-52–Cys-90, and Cys-57–Cys-72.

It belongs to the venom protein 11 family. 02 (wap-2) subfamily. Post-translationally, contains 5 disulfide bonds. Expressed by the venom gland.

The protein resides in the secreted. In terms of biological role, has antibacterial activity. This chain is U20-lycotoxin-Ls1c, found in Lycosa singoriensis (Wolf spider).